The primary structure comprises 308 residues: Ribosomal RNA small subunit methyltransferase H (308 aa).

S-adenosyl-L-methionine contacts are provided by residues 32–34 (GGH), D51, F78, D99, and Q106.

This sequence belongs to the methyltransferase superfamily. RsmH family.

It is found in the cytoplasm. It catalyses the reaction cytidine(1402) in 16S rRNA + S-adenosyl-L-methionine = N(4)-methylcytidine(1402) in 16S rRNA + S-adenosyl-L-homocysteine + H(+). Specifically methylates the N4 position of cytidine in position 1402 (C1402) of 16S rRNA. The sequence is that of Ribosomal RNA small subunit methyltransferase H from Campylobacter curvus (strain 525.92).